The sequence spans 341 residues: Retinol dehydrogenase 10 (341 aa).

A helical; Signal-anchor transmembrane segment spans residues 3–23 (IVVEFFVVTFKVLWAFVLAAA). Residue 40–64 (LITGAGSGLGRLFALEFARRRALLV) coordinates NADP(+). Substrate is bound at residue serine 197. Residue tyrosine 210 is the Proton acceptor of the active site.

Belongs to the short-chain dehydrogenases/reductases (SDR) family. In terms of tissue distribution, detected in retinal pigment epithelium (at protein level). Detected in retina, retinal pigment epithelium, and at lower levels in cornea, liver, kidney, pancreas, lung, brain and skeletal muscle.

The protein localises to the microsome membrane. It localises to the endoplasmic reticulum membrane. It catalyses the reaction all-trans-retinol + NADP(+) = all-trans-retinal + NADPH + H(+). It participates in cofactor metabolism; retinol metabolism. In terms of biological role, retinol dehydrogenase with a clear preference for NADP. Converts all-trans-retinol to all-trans-retinal. Has no detectable activity towards 11-cis-retinol, 9-cis-retinol and 13-cis-retinol. This chain is Retinol dehydrogenase 10 (RDH10), found in Bos taurus (Bovine).